We begin with the raw amino-acid sequence, 166 residues long: Interferon gamma (166 aa).

An N-terminal signal peptide occupies residues 1–23; sequence MNYTSYILAFQLCVILGSSGCYC. A Pyrrolidone carboxylic acid modification is found at glutamine 24. 2 N-linked (GlcNAc...) asparagine glycosylation sites follow: asparagine 39 and asparagine 106.

The protein belongs to the type II (or gamma) interferon family. As to quaternary structure, homodimer. Interacts with IFNGR1 (via extracellular domain); this interaction promotes IFNGR1 dimerization. Released primarily from activated T lymphocytes.

The protein resides in the secreted. Type II interferon produced by immune cells such as T-cells and NK cells that plays crucial roles in antimicrobial, antiviral, and antitumor responses by activating effector immune cells and enhancing antigen presentation. Primarily signals through the JAK-STAT pathway after interaction with its receptor IFNGR1 to affect gene regulation. Upon IFNG binding, IFNGR1 intracellular domain opens out to allow association of downstream signaling components JAK2, JAK1 and STAT1, leading to STAT1 activation, nuclear translocation and transcription of IFNG-regulated genes. Many of the induced genes are transcription factors such as IRF1 that are able to further drive regulation of a next wave of transcription. Plays a role in class I antigen presentation pathway by inducing a replacement of catalytic proteasome subunits with immunoproteasome subunits. In turn, increases the quantity, quality, and repertoire of peptides for class I MHC loading. Increases the efficiency of peptide generation also by inducing the expression of activator PA28 that associates with the proteasome and alters its proteolytic cleavage preference. Up-regulates as well MHC II complexes on the cell surface by promoting expression of several key molecules such as cathepsins B/CTSB, H/CTSH, and L/CTSL. Participates in the regulation of hematopoietic stem cells during development and under homeostatic conditions by affecting their development, quiescence, and differentiation. The chain is Interferon gamma (IFNG) from Camelus bactrianus (Bactrian camel).